The following is a 793-amino-acid chain: Probable alpha-fucosidase A (793 aa).

A signal peptide spans methionine 1 to alanine 20. 13 N-linked (GlcNAc...) asparagine glycosylation sites follow: asparagine 30, asparagine 83, asparagine 100, asparagine 104, asparagine 123, asparagine 179, asparagine 199, asparagine 234, asparagine 323, asparagine 597, asparagine 622, asparagine 660, and asparagine 757.

The protein belongs to the glycosyl hydrolase 95 family.

Its subcellular location is the secreted. The enzyme catalyses an alpha-L-fucoside + H2O = L-fucose + an alcohol. Alpha-fucosidase involved in degradation of fucosylated xyloglucans. Hydrolyzes alpha-1,2-linked fucose. The protein is Probable alpha-fucosidase A (afcA) of Aspergillus niger (strain ATCC MYA-4892 / CBS 513.88 / FGSC A1513).